A 506-amino-acid polypeptide reads, in one-letter code: uncharacterized protein (506 aa).

To R.prowazekii RP789, RP027 and RP028.

This is an uncharacterized protein from Synechocystis sp. (strain ATCC 27184 / PCC 6803 / Kazusa).